The sequence spans 472 residues: Ras-GEF domain-containing family member 1B (472 aa).

One can recognise an N-terminal Ras-GEF domain in the interval 34–164; sequence QDNNLLSGSL…IIQNLIRKLA (131 aa). One can recognise a Ras-GEF domain in the interval 204–452; the sequence is DPYTVAQQLT…YLASYESEGP (249 aa).

Its function is as follows. Guanine nucleotide exchange factor (GEF) with specificity for rap2a and other Ras family proteins (in vitro). In Xenopus tropicalis (Western clawed frog), this protein is Ras-GEF domain-containing family member 1B (rasgef1b).